The chain runs to 212 residues: NADH dehydrogenase [ubiquinone] iron-sulfur protein 8, mitochondrial (212 aa).

Residues 1-34 (MYRLSSSMLPRALAQAMRTGHLNGQSLHSSAVAA) constitute a mitochondrion transit peptide. 4Fe-4S ferredoxin-type domains follow at residues 104-133 (RRYP…IEAE) and 143-172 (TRYD…EGPN). The [4Fe-4S] cluster site is built by C113, C116, C119, C123, C152, C155, C158, and C162.

The protein belongs to the complex I 23 kDa subunit family. Complex I is composed of 45 different subunits. This is a component of the iron-sulfur (IP) fragment of the enzyme. Interacts with RAB5IF. [4Fe-4S] cluster is required as a cofactor.

It is found in the mitochondrion inner membrane. It carries out the reaction a ubiquinone + NADH + 5 H(+)(in) = a ubiquinol + NAD(+) + 4 H(+)(out). Its function is as follows. Core subunit of the mitochondrial membrane respiratory chain NADH dehydrogenase (Complex I) which catalyzes electron transfer from NADH through the respiratory chain, using ubiquinone as an electron acceptor. Essential for the catalytic activity and assembly of complex I. The protein is NADH dehydrogenase [ubiquinone] iron-sulfur protein 8, mitochondrial (Ndufs8) of Mus musculus (Mouse).